The sequence spans 251 residues: Uridylate kinase (251 aa).

Lys19–Gly22 contributes to the ATP binding site. Gly61 lines the UMP pocket. ATP contacts are provided by Gly62 and Arg66. Residues Asp81 and Thr142–Thr149 contribute to the UMP site. ATP-binding residues include Thr169, Tyr175, and Asp178.

It belongs to the UMP kinase family. As to quaternary structure, homohexamer.

The protein resides in the cytoplasm. The enzyme catalyses UMP + ATP = UDP + ADP. Its pathway is pyrimidine metabolism; CTP biosynthesis via de novo pathway; UDP from UMP (UMPK route): step 1/1. With respect to regulation, inhibited by UTP. In terms of biological role, catalyzes the reversible phosphorylation of UMP to UDP. In Anaeromyxobacter dehalogenans (strain 2CP-C), this protein is Uridylate kinase.